A 317-amino-acid chain; its full sequence is Transcriptional regulator LsrR (317 aa).

Positions 33-56 (QSEISDRLGLTRLKVSRLLEKGHQ) form a DNA-binding region, H-T-H motif.

It belongs to the SorC transcriptional regulatory family.

The protein resides in the cytoplasm. Inactivated by phosphorylated autoinducer-2 (phospho-AI-2). Phospho-AI-2 acts by binding to LsrR, which is then unable to bind to the promoter regions, allowing the transcription of the target genes. Transcriptional regulator that represses the expression of the lsr operon in the absence of the quorum-sensing signaling molecule autoinducer 2 (AI-2). It also represses the expression of the lsrRK operon. Acts by binding directly to the lsrA and lsrR promoter regions. In the presence of phosphorylated autoinducer-2 (phospho-AI-2), LsrR is inactivated, leading to the transcription of the genes. This chain is Transcriptional regulator LsrR (lsrR), found in Escherichia coli O139:H28 (strain E24377A / ETEC).